Here is a 321-residue protein sequence, read N- to C-terminus: S-methyl-5'-thioadenosine phosphorylase (321 aa).

Residues T30, 73–74, and 106–107 each bind phosphate; these read RH and SA. A substrate-binding site is contributed by M215. Position 216 (S216) interacts with phosphate. 239–241 contributes to the substrate binding site; sequence DYD.

Belongs to the PNP/MTAP phosphorylase family. MTAP subfamily. As to quaternary structure, homotrimer.

The protein resides in the cytoplasm. It is found in the nucleus. The enzyme catalyses S-methyl-5'-thioadenosine + phosphate = 5-(methylsulfanyl)-alpha-D-ribose 1-phosphate + adenine. It participates in amino-acid biosynthesis; L-methionine biosynthesis via salvage pathway; S-methyl-5-thio-alpha-D-ribose 1-phosphate from S-methyl-5'-thioadenosine (phosphorylase route): step 1/1. In terms of biological role, catalyzes the reversible phosphorylation of S-methyl-5'-thioadenosine (MTA) to adenine and 5-methylthioribose-1-phosphate. Involved in the breakdown of MTA, a major by-product of polyamine biosynthesis. Responsible for the first step in the methionine salvage pathway after MTA has been generated from S-adenosylmethionine. Has broad substrate specificity with 6-aminopurine nucleosides as preferred substrates. This is S-methyl-5'-thioadenosine phosphorylase from Yarrowia lipolytica (strain CLIB 122 / E 150) (Yeast).